Reading from the N-terminus, the 493-residue chain is Cobyric acid synthase (493 aa).

One can recognise a GATase cobBQ-type domain in the interval 255 to 441 (ELEIAVLRLP…LHGLLENGRW (187 aa)). The active-site Nucleophile is the Cys336. Residue His433 is part of the active site.

It belongs to the CobB/CobQ family. CobQ subfamily.

The protein operates within cofactor biosynthesis; adenosylcobalamin biosynthesis. In terms of biological role, catalyzes amidations at positions B, D, E, and G on adenosylcobyrinic A,C-diamide. NH(2) groups are provided by glutamine, and one molecule of ATP is hydrogenolyzed for each amidation. The chain is Cobyric acid synthase from Synechococcus sp. (strain RCC307).